The chain runs to 111 residues: Large ribosomal subunit protein P1 (111 aa).

The segment at 75-111 (AAAPAAEEKAEEEKKEEEEEKKEEEVDLSGLSGMFGF) is disordered. The span at 88 to 101 (KKEEEEEKKEEEVD) shows a compositional bias: acidic residues.

This sequence belongs to the eukaryotic ribosomal protein P1/P2 family. In terms of assembly, part of the 50S ribosomal subunit. Homodimer, it forms part of the ribosomal stalk which helps the ribosome interact with GTP-bound translation factors. Forms a heptameric uL10/P0(P1)2(P1)2(P1)2 complex, where uL10/P0 forms an elongated spine to which the P1 dimers bind in a sequential fashion.

Forms part of the ribosomal stalk, playing a central role in the interaction of the ribosome with GTP-bound translation factors. The sequence is that of Large ribosomal subunit protein P1 from Aeropyrum pernix (strain ATCC 700893 / DSM 11879 / JCM 9820 / NBRC 100138 / K1).